A 490-amino-acid chain; its full sequence is Metal cation symporter ZIP14 (490 aa).

Positions 1 to 28 (MKLLHPAFQSCLLLTLLGLWRTTPEAHA) are cleaved as a signal peptide. Topologically, residues 29-155 (SSPGAPAISA…PSAVEVWGYG (127 aa)) are extracellular. Asn75, Asn85, and Asn100 each carry an N-linked (GlcNAc...) asparagine glycan. Residues 156-176 (LLCVTVISLCSLLGASVVPFM) form a helical membrane-spanning segment. The Cytoplasmic segment spans residues 177 to 184 (KKTFYKRL). The chain crosses the membrane as a helical span at residues 185–205 (LLYFIALAIGTLYSNALFQLI). Residues 206-222 (PEAFGFNPLEDYYVSKS) lie on the Extracellular side of the membrane. Residues 223 to 243 (AVVFGGFYLFFFTEKILKILL) form a helical membrane-spanning segment. Topologically, residues 244–395 (KQKNEHHHGH…LLNAGMSIQQ (152 aa)) are cytoplasmic. Residues 249-256 (HHHGHSHY) carry the HHHGHXHX-motif motif. The XEXPHE-motif signature appears at 374-379 (EEFPHE). The chain crosses the membrane as a helical span at residues 396–416 (ALFFNFLSACCCYLGLAFGIL). Residues 417–422 (AGSHFS) lie on the Extracellular side of the membrane. Residues 423 to 443 (ANWIFALAGGMFLYISLADMF) form a helical membrane-spanning segment. At 444–458 (PEMNEVCQEDERKGS) the chain is on the cytoplasmic side. Residues 459-479 (ILIPFVIQNLGLLTGFTIMVV) traverse the membrane as a helical segment. Residues 480 to 490 (LTMYSGQIQIG) lie on the Extracellular side of the membrane.

The protein belongs to the ZIP transporter (TC 2.A.5) family. In terms of assembly, homotrimer. Post-translationally, ubiquitinated. Ubiquitination occurs upon iron depletion. The ubiquitinated form undergoes proteasomal degradation. In terms of processing, N-glycosylated. N-glycosylation at Asn-100 is required for iron-regulated extraction of the transporter from membranes and subsequent proteasomal degradation.

It is found in the cell membrane. Its subcellular location is the apical cell membrane. It localises to the basolateral cell membrane. The protein localises to the early endosome membrane. The protein resides in the late endosome membrane. It is found in the lysosome membrane. It catalyses the reaction Zn(2+)(out) + 2 hydrogencarbonate(out) = Zn(2+)(in) + 2 hydrogencarbonate(in). The catalysed reaction is Mn(2+)(out) + 2 hydrogencarbonate(out) = Mn(2+)(in) + 2 hydrogencarbonate(in). It carries out the reaction Fe(2+)(out) + 2 hydrogencarbonate(out) = Fe(2+)(in) + 2 hydrogencarbonate(in). The enzyme catalyses Cd(2+)(out) + 2 hydrogencarbonate(out) = Cd(2+)(in) + 2 hydrogencarbonate(in). Functionally, electroneutral transporter of the plasma membrane mediating the cellular uptake of the divalent metal cations zinc, manganese and iron that are important for tissue homeostasis, metabolism, development and immunity. Functions as an energy-dependent symporter, transporting through the membranes an electroneutral complex composed of a divalent metal cation and two bicarbonate anions. Beside these endogenous cellular substrates, can also import cadmium a non-essential metal which is cytotoxic and carcinogenic. Controls the cellular uptake by the intestinal epithelium of systemic zinc, which is in turn required to maintain tight junctions and the intestinal permeability. Modifies the activity of zinc-dependent phosphodiesterases, thereby indirectly regulating G protein-coupled receptor signaling pathways important for gluconeogenesis and chondrocyte differentiation. Regulates insulin receptor signaling, glucose uptake, glycogen synthesis and gluconeogenesis in hepatocytes through the zinc-dependent intracellular catabolism of insulin. Through zinc cellular uptake also plays a role in the adaptation of cells to endoplasmic reticulum stress. Major manganese transporter of the basolateral membrane of intestinal epithelial cells, it plays a central role in manganese systemic homeostasis through intestinal manganese uptake. Also involved in manganese extracellular uptake by cells of the blood-brain barrier. May also play a role in manganese and zinc homeostasis participating in their elimination from the blood through the hepatobiliary excretion. Also functions in the extracellular uptake of free iron. May also function intracellularly and mediate the transport from endosomes to cytosol of iron endocytosed by transferrin. Plays a role in innate immunity by regulating the expression of cytokines by activated macrophages. This is Metal cation symporter ZIP14 from Pongo abelii (Sumatran orangutan).